The primary structure comprises 44 residues: Small, acid-soluble spore protein N (44 aa).

Positions 1-44 (MGNPKKNSKDFVPNHIGTQSKKAGGNKGKQMQDTTGKQPIVDNG) are disordered.

The protein belongs to the SspN family.

The protein resides in the spore core. The sequence is that of Small, acid-soluble spore protein N from Bacillus cytotoxicus (strain DSM 22905 / CIP 110041 / 391-98 / NVH 391-98).